The sequence spans 102 residues: Large ribosomal subunit protein bL21 (102 aa).

This sequence belongs to the bacterial ribosomal protein bL21 family. In terms of assembly, part of the 50S ribosomal subunit. Contacts protein L20.

This protein binds to 23S rRNA in the presence of protein L20. The chain is Large ribosomal subunit protein bL21 from Staphylococcus aureus.